The following is a 738-amino-acid chain: Propionyl-CoA carboxylase alpha chain, mitochondrial (738 aa).

A Biotin carboxylation domain is found at 62–509 (KFDKILIANR…TTKYLPEVYP (448 aa)). ATP-binding positions include Lys-177, 209-270 (SREI…PRHI), Glu-261, and Asn-296. In terms of domain architecture, ATP-grasp spans 181 to 378 (KKIATAARVS…IVQQMLRVAY (198 aa)). Residues Glu-336, Glu-349, and Asn-351 each coordinate Mg(2+). Glu-336, Glu-349, and Asn-351 together coordinate Mn(2+). The active site involves Arg-353. Phe-409 is a binding site for biotin. One can recognise a Biotinyl-binding domain in the interval 663–738 (KAKVDLSTVV…DEGEVLVELE (76 aa)). Residue Lys-704 is modified to N6-biotinyllysine.

In terms of assembly, the holoenzyme is a dodecamer composed of 6 alpha subunits and 6 beta subunits. Interacts with sir-2.2. The cofactor is biotin. Mg(2+) serves as cofactor. Requires Mn(2+) as cofactor. The biotin cofactor is covalently attached to the C-terminal biotinyl-binding domain and is required for the catalytic activity.

It localises to the mitochondrion matrix. It carries out the reaction propanoyl-CoA + hydrogencarbonate + ATP = (S)-methylmalonyl-CoA + ADP + phosphate + H(+). The enzyme catalyses butanoyl-CoA + hydrogencarbonate + ATP = (2S)-ethylmalonyl-CoA + ADP + phosphate + H(+). It participates in metabolic intermediate metabolism; propanoyl-CoA degradation; succinyl-CoA from propanoyl-CoA: step 1/3. Its function is as follows. This is one of the 2 subunits of the biotin-dependent propionyl-CoA carboxylase (PCC), a mitochondrial enzyme involved in the catabolism of odd chain fatty acids, branched-chain amino acids isoleucine, threonine, methionine, and valine and other metabolites. Propionyl-CoA carboxylase catalyzes the carboxylation of propionyl-CoA/propanoyl-CoA to D-methylmalonyl-CoA/(S)-methylmalonyl-CoA. Within the holoenzyme, the alpha subunit catalyzes the ATP-dependent carboxylation of the biotin carried by the biotin carboxyl carrier (BCC) domain, while the beta subunit then transfers the carboxyl group from carboxylated biotin to propionyl-CoA. Propionyl-CoA carboxylase also significantly acts on butyryl-CoA/butanoyl-CoA, which is converted to ethylmalonyl-CoA/(2S)-ethylmalonyl-CoA. Other alternative minor substrates include (2E)-butenoyl-CoA/crotonoyl-CoA. This chain is Propionyl-CoA carboxylase alpha chain, mitochondrial (pcca-1), found in Caenorhabditis briggsae.